The sequence spans 268 residues: NADH-quinone oxidoreductase subunit B 1 (268 aa).

Positions 42, 43, 108, and 138 each coordinate [4Fe-4S] cluster.

Belongs to the complex I 20 kDa subunit family. As to quaternary structure, NDH-1 is composed of 14 different subunits. Subunits NuoB, C, D, E, F, and G constitute the peripheral sector of the complex. It depends on [4Fe-4S] cluster as a cofactor.

It is found in the cell membrane. It carries out the reaction a quinone + NADH + 5 H(+)(in) = a quinol + NAD(+) + 4 H(+)(out). Functionally, NDH-1 shuttles electrons from NADH, via FMN and iron-sulfur (Fe-S) centers, to quinones in the respiratory chain. The immediate electron acceptor for the enzyme in this species is believed to be ubiquinone. Couples the redox reaction to proton translocation (for every two electrons transferred, four hydrogen ions are translocated across the cytoplasmic membrane), and thus conserves the redox energy in a proton gradient. In Roseiflexus sp. (strain RS-1), this protein is NADH-quinone oxidoreductase subunit B 1.